Reading from the N-terminus, the 122-residue chain is Large ribosomal subunit protein uL14c (122 aa).

The protein belongs to the universal ribosomal protein uL14 family. Part of the 50S ribosomal subunit.

It is found in the plastid. The protein localises to the chloroplast. Its function is as follows. Binds to 23S rRNA. In Morus indica (Mulberry), this protein is Large ribosomal subunit protein uL14c.